The sequence spans 171 residues: Neuronal vesicle trafficking-associated protein 2 (171 aa).

Residues Met-1–Glu-10 show a composition bias toward polar residues. Residues Met-1 to Gly-21 form a disordered region. Topologically, residues Met-1–Thr-71 are cytoplasmic. Residues Val-72–Tyr-92 form a helical; Signal-anchor for type II membrane protein membrane-spanning segment. The Lumenal portion of the chain corresponds to Lys-93 to His-171.

This sequence belongs to the NSG family.

It is found in the membrane. It localises to the golgi apparatus. The protein resides in the trans-Golgi network membrane. Its subcellular location is the cell projection. The protein localises to the dendrite. It is found in the endosome membrane. It localises to the early endosome membrane. The protein resides in the late endosome membrane. Its subcellular location is the lysosome lumen. The protein localises to the cytoplasmic vesicle membrane. It is found in the golgi stack membrane. It localises to the endosome. The protein resides in the multivesicular body membrane. The polypeptide is Neuronal vesicle trafficking-associated protein 2 (Homo sapiens (Human)).